The primary structure comprises 225 residues: Ribonuclease 3 (225 aa).

Positions phenylalanine 4 to asparagine 133 constitute an RNase III domain. Glutamate 46 contacts Mg(2+). Residue aspartate 50 is part of the active site. Asparagine 119 and glutamate 122 together coordinate Mg(2+). The active site involves glutamate 122. The 68-residue stretch at aspartate 158–lysine 225 folds into the DRBM domain.

This sequence belongs to the ribonuclease III family. As to quaternary structure, homodimer. Mg(2+) serves as cofactor.

It localises to the cytoplasm. The enzyme catalyses Endonucleolytic cleavage to 5'-phosphomonoester.. Digests double-stranded RNA. Involved in the processing of primary rRNA transcript to yield the immediate precursors to the large and small rRNAs (23S and 16S). Processes some mRNAs, and tRNAs when they are encoded in the rRNA operon. Processes pre-crRNA and tracrRNA of type II CRISPR loci if present in the organism. In Rickettsia felis (strain ATCC VR-1525 / URRWXCal2) (Rickettsia azadi), this protein is Ribonuclease 3.